A 533-amino-acid chain; its full sequence is Calcium-dependent protein kinase 8 (533 aa).

Positions 1 to 21 (MGNCCASPGSETGSKKGKPKI) are disordered. Gly2 is lipidated: N-myristoyl glycine. The 259-residue stretch at 57 to 315 (YDLGREVGRG…AAQVLEHSWI (259 aa)) folds into the Protein kinase domain. ATP contacts are provided by residues 63–71 (VGRGEFGIT) and Lys86. The Proton acceptor role is filled by Asp181. Ser221 carries the post-translational modification Phosphoserine. The autoinhibitory domain stretch occupies residues 321 to 351 (APNVSLGETVKARLKQFSVMNKLKKRALRVI). EF-hand domains are found at residues 358-394 (EEVA…GQQQ), 395-430 (IPDT…LKKM), 431-466 (ANDE…EVDT), and 467-502 (NSEE…GTDW). Ca(2+) is bound by residues Asp371, Thr375, Lys377, Glu382, Asp408, Asp410, Asp412, Thr414, Glu419, Asp444, Asn446, Ser448, Tyr450, Glu455, Asp480, Asp482, Asp484, and Arg486. Ser488 is modified (phosphoserine). Residue Glu491 coordinates Ca(2+). Ser526 is modified (phosphoserine).

It belongs to the protein kinase superfamily. Ser/Thr protein kinase family. CDPK subfamily.

Its subcellular location is the cell membrane. The enzyme catalyses L-seryl-[protein] + ATP = O-phospho-L-seryl-[protein] + ADP + H(+). The catalysed reaction is L-threonyl-[protein] + ATP = O-phospho-L-threonyl-[protein] + ADP + H(+). Its activity is regulated as follows. Activated by calcium. Autophosphorylation may play an important role in the regulation of the kinase activity. In terms of biological role, may play a role in signal transduction pathways that involve calcium as a second messenger. This is Calcium-dependent protein kinase 8 (CPK8) from Arabidopsis thaliana (Mouse-ear cress).